A 90-amino-acid chain; its full sequence is Small ribosomal subunit protein uS17 (90 aa).

It belongs to the universal ribosomal protein uS17 family. Part of the 30S ribosomal subunit.

One of the primary rRNA binding proteins, it binds specifically to the 5'-end of 16S ribosomal RNA. The protein is Small ribosomal subunit protein uS17 of Burkholderia cenocepacia (strain ATCC BAA-245 / DSM 16553 / LMG 16656 / NCTC 13227 / J2315 / CF5610) (Burkholderia cepacia (strain J2315)).